A 344-amino-acid chain; its full sequence is Probable dual-specificity RNA methyltransferase RlmN (344 aa).

Glu-92 serves as the catalytic Proton acceptor. The Radical SAM core domain maps to 98 to 325 (DEDRATLCVS…TTIRASRGED (228 aa)). Cys-105 and Cys-330 are disulfide-bonded. Cys-112, Cys-116, and Cys-119 together coordinate [4Fe-4S] cluster. S-adenosyl-L-methionine contacts are provided by residues 157 to 158 (GE), Ser-189, 211 to 213 (SLH), and His-287. Cys-330 acts as the S-methylcysteine intermediate in catalysis.

It belongs to the radical SAM superfamily. RlmN family. The cofactor is [4Fe-4S] cluster.

It localises to the cytoplasm. The catalysed reaction is adenosine(2503) in 23S rRNA + 2 reduced [2Fe-2S]-[ferredoxin] + 2 S-adenosyl-L-methionine = 2-methyladenosine(2503) in 23S rRNA + 5'-deoxyadenosine + L-methionine + 2 oxidized [2Fe-2S]-[ferredoxin] + S-adenosyl-L-homocysteine. It carries out the reaction adenosine(37) in tRNA + 2 reduced [2Fe-2S]-[ferredoxin] + 2 S-adenosyl-L-methionine = 2-methyladenosine(37) in tRNA + 5'-deoxyadenosine + L-methionine + 2 oxidized [2Fe-2S]-[ferredoxin] + S-adenosyl-L-homocysteine. Its function is as follows. Specifically methylates position 2 of adenine 2503 in 23S rRNA and position 2 of adenine 37 in tRNAs. The polypeptide is Probable dual-specificity RNA methyltransferase RlmN (Bacteroides fragilis (strain YCH46)).